The primary structure comprises 638 residues: Zona pellucida sperm-binding protein 1 (638 aa).

A signal peptide spans 1-25 (MAGGSATTWGYPVALLLLVATLGLG). The Extracellular segment spans residues 26–601 (RWLQPDPGLP…DSNGNSSLRP (576 aa)). N-linked (GlcNAc...) asparagine glycosylation occurs at Asn76. Residues 165-175 (LPTSGHTSQGS) are compositionally biased toward polar residues. The disordered stretch occupies residues 165 to 208 (LPTSGHTSQGSGHAFPSPLDPGHSSVHPTPALPSPGPGPTLATL). A P-type domain is found at 234 to 274 (EQCQVASGHLPCIVRRTSKEACQQAGCCYDNTREVPCYYGN). 3 disulfide bridges follow: Cys236–Cys261, Cys245–Cys260, and Cys255–Cys270. The 275-residue stretch at 279–553 (QCFRDGYFVL…TACSTGTTRQ (275 aa)) folds into the ZP domain. An N-linked (GlcNAc...) asparagine glycan is attached at Asn379. A disulfide bridge connects residues Cys457 and Cys478. The interval 549–594 (GTTRQRRSSGHRNDTARPQDIVSSPGPVGFEDSYGQEPTLGPTDSN) is disordered. The propeptide at 554–638 (RRSSGHRNDT…AQKLWESNRQ (85 aa)) is removed in mature form. Residues Asn561 and Asn596 are each glycosylated (N-linked (GlcNAc...) asparagine). The helical transmembrane segment at 602 to 622 (LLWAVLLLPAVALVLGFGVFV) threads the bilayer. The Cytoplasmic portion of the chain corresponds to 623-638 (GLSQTWAQKLWESNRQ).

Belongs to the ZP domain family. ZPB subfamily. In terms of assembly, polymers of ZP2 and ZP3 organized into long filaments cross-linked by ZP1 homodimers. Interacts with ZP3. Proteolytically cleaved before the transmembrane segment to yield the secreted ectodomain incorporated in the zona pellucida. Post-translationally, O-glycosylated. Expressed in oocytes (at protein level).

It localises to the zona pellucida. Its subcellular location is the cell membrane. Functionally, component of the zona pellucida, an extracellular matrix surrounding oocytes which mediates sperm binding, induction of the acrosome reaction and prevents post-fertilization polyspermy. The zona pellucida is composed of 3 to 4 glycoproteins, ZP1, ZP2, ZP3, and ZP4. ZP1 ensures the structural integrity of the zona pellucida. The chain is Zona pellucida sperm-binding protein 1 (ZP1) from Homo sapiens (Human).